The sequence spans 270 residues: Tetraspanin-14 (270 aa).

The Cytoplasmic segment spans residues 1–17 (MHYYRYSNAEVSCWYKY). A helical transmembrane segment spans residues 18 to 38 (LLFSYNIVFWLAGVVFLGVGL). Over 39–61 (WAWSEKGVLSDLTKVTRLHGIDP) the chain is Extracellular. A helical membrane pass occupies residues 62 to 82 (VVLVLMVGVVMFTLGFAGCVG). Residues 83–92 (ALRENICLLK) are Cytoplasmic-facing. Residues 93–113 (FFCGAIVLIFFLELAVAVLAF) form a helical membrane-spanning segment. The Extracellular segment spans residues 114–232 (LFQDWVRDRF…QALEGWLPRN (119 aa)). The necessary and sufficient for interaction with ADAM10 stretch occupies residues 114-232 (LFQDWVRDRF…QALEGWLPRN (119 aa)). Cystine bridges form between Cys-153-Cys-221, Cys-154-Cys-186, Cys-170-Cys-180, and Cys-187-Cys-200. N-linked (GlcNAc...) asparagine glycosylation is present at Asn-169. Residues 233-253 (IYIVAGVFIAISLLQIFGIFL) traverse the membrane as a helical segment. Over 254–270 (ARTLISDIEAVKAGHHF) the chain is Cytoplasmic.

Belongs to the tetraspanin (TM4SF) family. Interacts with ADAM10; the interaction promotes ADAM10 maturation and cell surface expression.

It localises to the cell membrane. Functionally, part of TspanC8 subgroup, composed of 6 members that interact with the transmembrane metalloprotease ADAM10. This interaction is required for ADAM10 exit from the endoplasmic reticulum and for enzymatic maturation and trafficking to the cell surface as well as substrate specificity. Different TspanC8/ADAM10 complexes have distinct substrates. Negatively regulates ADAM10-mediated cleavage of GP6. Promotes ADAM10-mediated cleavage of CDH5. In Mus musculus (Mouse), this protein is Tetraspanin-14 (Tspan14).